The following is a 383-amino-acid chain: 8-amino-7-oxononanoate synthase (383 aa).

A substrate-binding site is contributed by arginine 23. 110 to 111 (GF) serves as a coordination point for pyridoxal 5'-phosphate. Histidine 135 is a binding site for substrate. Pyridoxal 5'-phosphate-binding residues include serine 181, histidine 209, and threonine 235. Lysine 238 is subject to N6-(pyridoxal phosphate)lysine. Threonine 351 lines the substrate pocket.

It belongs to the class-II pyridoxal-phosphate-dependent aminotransferase family. BioF subfamily. In terms of assembly, homodimer. It depends on pyridoxal 5'-phosphate as a cofactor.

It carries out the reaction 6-carboxyhexanoyl-[ACP] + L-alanine + H(+) = (8S)-8-amino-7-oxononanoate + holo-[ACP] + CO2. It participates in cofactor biosynthesis; biotin biosynthesis. Its function is as follows. Catalyzes the decarboxylative condensation of pimeloyl-[acyl-carrier protein] and L-alanine to produce 8-amino-7-oxononanoate (AON), [acyl-carrier protein], and carbon dioxide. The protein is 8-amino-7-oxononanoate synthase of Aliivibrio salmonicida (strain LFI1238) (Vibrio salmonicida (strain LFI1238)).